The chain runs to 120 residues: UPF0231 protein Spro_4007 (120 aa).

Belongs to the UPF0231 family.

The polypeptide is UPF0231 protein Spro_4007 (Serratia proteamaculans (strain 568)).